The chain runs to 353 residues: Photosystem II protein D1 (353 aa).

Position 2 is an N-acetylthreonine (Thr-2). A Phosphothreonine modification is found at Thr-2. Helical transmembrane passes span 29 to 46 (YIGW…TATS), 118 to 133 (HFLL…EWEL), and 142 to 156 (WIAV…AATA). Residue His-118 coordinates chlorophyll a. Tyr-126 provides a ligand contact to pheophytin a. Residues Asp-170 and Glu-189 each coordinate [CaMn4O5] cluster. The chain crosses the membrane as a helical span at residues 197–218 (FHMLGVAGVFGGSLFSAMHGSL). Residue His-198 participates in chlorophyll a binding. Residues His-215 and 264–265 (SF) contribute to the a quinone site. His-215 lines the Fe cation pocket. Residue His-272 participates in Fe cation binding. Residues 274–288 (FLAAWPVVGIWFTAL) form a helical membrane-spanning segment. [CaMn4O5] cluster-binding residues include His-332, Glu-333, Asp-342, and Ala-344. Residues 345–353 (ALEVPSLNG) constitute a propeptide that is removed on maturation.

This sequence belongs to the reaction center PufL/M/PsbA/D family. PSII is composed of 1 copy each of membrane proteins PsbA, PsbB, PsbC, PsbD, PsbE, PsbF, PsbH, PsbI, PsbJ, PsbK, PsbL, PsbM, PsbT, PsbX, PsbY, PsbZ, Psb30/Ycf12, at least 3 peripheral proteins of the oxygen-evolving complex and a large number of cofactors. It forms dimeric complexes. The D1/D2 heterodimer binds P680, chlorophylls that are the primary electron donor of PSII, and subsequent electron acceptors. It shares a non-heme iron and each subunit binds pheophytin, quinone, additional chlorophylls, carotenoids and lipids. D1 provides most of the ligands for the Mn4-Ca-O5 cluster of the oxygen-evolving complex (OEC). There is also a Cl(-1) ion associated with D1 and D2, which is required for oxygen evolution. The PSII complex binds additional chlorophylls, carotenoids and specific lipids. is required as a cofactor. In terms of processing, tyr-161 forms a radical intermediate that is referred to as redox-active TyrZ, YZ or Y-Z. Post-translationally, C-terminally processed by CTPA; processing is essential to allow assembly of the oxygen-evolving complex and thus photosynthetic growth.

The protein resides in the plastid. It is found in the chloroplast thylakoid membrane. The enzyme catalyses 2 a plastoquinone + 4 hnu + 2 H2O = 2 a plastoquinol + O2. Functionally, photosystem II (PSII) is a light-driven water:plastoquinone oxidoreductase that uses light energy to abstract electrons from H(2)O, generating O(2) and a proton gradient subsequently used for ATP formation. It consists of a core antenna complex that captures photons, and an electron transfer chain that converts photonic excitation into a charge separation. The D1/D2 (PsbA/PsbD) reaction center heterodimer binds P680, the primary electron donor of PSII as well as several subsequent electron acceptors. The protein is Photosystem II protein D1 of Oryza nivara (Indian wild rice).